The chain runs to 78 residues: Large ribosomal subunit protein bL28 (78 aa).

The segment at 1 to 21 (MSRVCQVTGKKPMVGNNRSHA) is disordered.

This sequence belongs to the bacterial ribosomal protein bL28 family.

The sequence is that of Large ribosomal subunit protein bL28 from Shewanella baltica (strain OS223).